Consider the following 567-residue polypeptide: Membrane protein insertase YidC (567 aa).

A helical membrane pass occupies residues 3 to 23; sequence IQRIVLFAGLAIVSYLMVLAW. Residues 32–80 are disordered; the sequence is TEQVAEAQSSSDSSATNSTDDMILPEDNNAGGEEFATPETGSLASTSAN. Over residues 40 to 52 the composition is skewed to low complexity; the sequence is SSSDSSATNSTDD. The segment covering 70–80 has biased composition (polar residues); sequence ETGSLASTSAN. Transmembrane regions (helical) follow at residues 354 to 374, 378 to 398, 445 to 465, 485 to 505, and 522 to 542; these read FGWL…FYGL, WGVA…HLSA, GGCL…WVLF, MDPY…QMSL, and PLIF…YWLV.

The protein belongs to the OXA1/ALB3/YidC family. Type 1 subfamily. As to quaternary structure, interacts with the Sec translocase complex via SecD. Specifically interacts with transmembrane segments of nascent integral membrane proteins during membrane integration.

The protein resides in the cell inner membrane. Required for the insertion and/or proper folding and/or complex formation of integral membrane proteins into the membrane. Involved in integration of membrane proteins that insert both dependently and independently of the Sec translocase complex, as well as at least some lipoproteins. Aids folding of multispanning membrane proteins. The protein is Membrane protein insertase YidC of Marinobacter nauticus (strain ATCC 700491 / DSM 11845 / VT8) (Marinobacter aquaeolei).